Here is a 154-residue protein sequence, read N- to C-terminus: Nitrogen regulatory protein (154 aa).

The PTS EIIA type-2 domain maps to Gln6–Val150. The active-site Tele-phosphohistidine intermediate is His68.

The protein localises to the cytoplasm. Functionally, seems to have a role in regulating nitrogen assimilation. The chain is Nitrogen regulatory protein (ptsN) from Pseudomonas aeruginosa (strain ATCC 15692 / DSM 22644 / CIP 104116 / JCM 14847 / LMG 12228 / 1C / PRS 101 / PAO1).